A 266-amino-acid chain; its full sequence is Phosphonates import ATP-binding protein PhnC (266 aa).

One can recognise an ABC transporter domain in the interval 2-246 (IEIKNVSKTY…KFAEIYGRPI (245 aa)). ATP is bound at residue 35-42 (GLSGAGKS).

This sequence belongs to the ABC transporter superfamily. Phosphonates importer (TC 3.A.1.9.1) family. As to quaternary structure, the complex is composed of two ATP-binding proteins (PhnC), two transmembrane proteins (PhnE) and a solute-binding protein (PhnD).

It localises to the cell membrane. It catalyses the reaction phosphonate(out) + ATP + H2O = phosphonate(in) + ADP + phosphate + H(+). In terms of biological role, part of the ABC transporter complex PhnCDE involved in phosphonates import. Responsible for energy coupling to the transport system. This Shouchella clausii (strain KSM-K16) (Alkalihalobacillus clausii) protein is Phosphonates import ATP-binding protein PhnC.